Here is a 445-residue protein sequence, read N- to C-terminus: Homoserine O-succinyltransferase (445 aa).

The AB hydrolase-1 domain maps to 45-411 (NAVLICHALS…APHGHDSFLF (367 aa)). S153 acts as the Nucleophile in catalysis. Residue R223 coordinates substrate. Active-site residues include D373 and H406. Position 407 (D407) interacts with substrate.

The protein belongs to the AB hydrolase superfamily. MetX family. In terms of assembly, homodimer.

It localises to the cytoplasm. The catalysed reaction is L-homoserine + succinyl-CoA = O-succinyl-L-homoserine + CoA. It participates in amino-acid biosynthesis; L-methionine biosynthesis via de novo pathway; O-succinyl-L-homoserine from L-homoserine: step 1/1. Its function is as follows. Transfers a succinyl group from succinyl-CoA to L-homoserine, forming succinyl-L-homoserine. In Psychrobacter arcticus (strain DSM 17307 / VKM B-2377 / 273-4), this protein is Homoserine O-succinyltransferase.